The chain runs to 250 residues: uncharacterized protein (250 aa).

The protein belongs to the glycosyltransferase 2 family.

This is an uncharacterized protein from Haemophilus influenzae (strain ATCC 51907 / DSM 11121 / KW20 / Rd).